We begin with the raw amino-acid sequence, 475 residues long: MVPQTETKAGAGFKAGVKDYRLTYYTPDYMVKDTDILAAFRMTPQPGVPPEECGAAVAAESSTGTWTTVWTDGLTSLDRYKGRCYDIEPVAGEDNQYIAYVAYPIDLFEEGSVTNLFTSIVGNVFGFKALRALRLEDLRIPPAYAKTFQGPPHGIQVERDKINKYGRGLLGCTIKPKLGLSAKNYGRAVYECLRGGLDFTKDDENVNSQPFMRWRDRFTFVAEAIYKSQAETGEIKGHYLNVTAATSEEMMKRAECAKDLGVPIIMHDYLTAGLTANTSLAHYCRDTGLLLHIHRAMHAVIDRQRNHGIHFRVLAKALRLSGGDHLHSGTVVGKLEGEREVTLGFVDLMRDDYIEKDRSRGIYFTQDWCSLPGVMPVASGGIHVWHMPALVEIFGDDACLQFGGGTLGHPWGNAPGAAANRVALEACTQARNAGVDLARKGGDVIRAACKWSPELAAACEVWKEIKFEFETIDKL.

Residues 1–2 (MV) constitute a propeptide that is removed on maturation. Pro3 is subject to N-acetylproline. At Lys14 the chain carries N6,N6,N6-trimethyllysine. Substrate is bound by residues Asn123 and Thr173. Lys175 serves as the catalytic Proton acceptor. Lys177 contributes to the substrate binding site. Mg(2+)-binding residues include Lys201, Asp203, and Glu204. Residue Lys201 is modified to N6-carboxylysine. His294 serves as the catalytic Proton acceptor. Substrate contacts are provided by Arg295, His327, and Ser379.

The protein belongs to the RuBisCO large chain family. Type I subfamily. In terms of assembly, heterohexadecamer of 8 large chains and 8 small chains. The cofactor is Mg(2+).

Its subcellular location is the plastid. The protein resides in the chloroplast. It carries out the reaction 2 (2R)-3-phosphoglycerate + 2 H(+) = D-ribulose 1,5-bisphosphate + CO2 + H2O. The catalysed reaction is D-ribulose 1,5-bisphosphate + O2 = 2-phosphoglycolate + (2R)-3-phosphoglycerate + 2 H(+). Functionally, ruBisCO catalyzes two reactions: the carboxylation of D-ribulose 1,5-bisphosphate, the primary event in carbon dioxide fixation, as well as the oxidative fragmentation of the pentose substrate in the photorespiration process. Both reactions occur simultaneously and in competition at the same active site. The polypeptide is Ribulose bisphosphate carboxylase large chain (Stigeoclonium helveticum (Green alga)).